Here is a 199-residue protein sequence, read N- to C-terminus: dITP/XTP pyrophosphatase (199 aa).

Position 8 to 13 (8 to 13) interacts with substrate; the sequence is THNRNK. The Proton acceptor role is filled by D68. D68 is a binding site for Mg(2+). Residues S69, 151–154, K174, and 179–180 contribute to the substrate site; these read HGYD and HR.

This sequence belongs to the HAM1 NTPase family. Homodimer. Requires Mg(2+) as cofactor.

The enzyme catalyses XTP + H2O = XMP + diphosphate + H(+). It catalyses the reaction dITP + H2O = dIMP + diphosphate + H(+). The catalysed reaction is ITP + H2O = IMP + diphosphate + H(+). Functionally, pyrophosphatase that catalyzes the hydrolysis of nucleoside triphosphates to their monophosphate derivatives, with a high preference for the non-canonical purine nucleotides XTP (xanthosine triphosphate), dITP (deoxyinosine triphosphate) and ITP. Seems to function as a house-cleaning enzyme that removes non-canonical purine nucleotides from the nucleotide pool, thus preventing their incorporation into DNA/RNA and avoiding chromosomal lesions. The sequence is that of dITP/XTP pyrophosphatase from Leifsonia xyli subsp. xyli (strain CTCB07).